The chain runs to 28 residues: Turritoxin F21-2 (28 aa).

Expressed by the venom duct.

It is found in the secreted. Its function is as follows. Potent inhibitor of human alpha-3-beta-2 nAChRs (IC(50)=566.2 nM). Irreversibly inhibits the acetylcholine-induced response on human alpha-7/CHRNA7 (55% inhibition at 5.6 uM) and alpha-3-beta-2/CHRNA3-CHRNB2 (91% inhibition) nAChRs. This Polystira nobilis (Sea snail) protein is Turritoxin F21-2.